Here is a 278-residue protein sequence, read N- to C-terminus: Phage-like element PBSX protein XkdB (278 aa).

A DNA-binding region (H-T-H motif) is located at residues Leu-58 to Leu-80. Disordered regions lie at residues Ser-117–Ile-136 and Gln-239–Val-278. The span at Lys-248–Thr-263 shows a compositional bias: basic and acidic residues.

It to B.subtilis YqaL.

The protein is Phage-like element PBSX protein XkdB (xkdB) of Bacillus subtilis (strain 168).